Reading from the N-terminus, the 729-residue chain is Probable pre-mRNA-splicing factor ATP-dependent RNA helicase DEAH3 (729 aa).

The Helicase ATP-binding domain maps to Leu-75 to Pro-244. Gly-88–Thr-95 lines the ATP pocket. A DEAH box motif is present at residues Asp-191–His-194. Residues Thr-269 to Gly-449 form the Helicase C-terminal domain.

It belongs to the DEAD box helicase family. DEAH subfamily. PRP43 sub-subfamily.

It carries out the reaction ATP + H2O = ADP + phosphate + H(+). Its function is as follows. May be involved in pre-mRNA splicing. The chain is Probable pre-mRNA-splicing factor ATP-dependent RNA helicase DEAH3 from Arabidopsis thaliana (Mouse-ear cress).